The following is a 346-amino-acid chain: MARHPRWTLSQVTELFEKPLLELLFEAQQIHRQHFDPQQVQVSTLLSIKTGACPEDCKYCPQSSRYKTGLEAERLMEVEQVLDSARKAKNAGSTRFCMGAAWRNPHERDMPYLEKIVQGVKAMGLETCMTLGMLNESQAQRLANAGLDYYNHNLDTSPEFYGNIITTRTYQERLDTLEKVREAGIKVCSGGIVGLGETVTDRAGLLLQLANLPTPPESVPINMLVKVKGTPLADNDDVDAFDFIRTIAVARIMMPTSYVRLSAGREQMNEQTQAMCFMAGANSIFYGCKLLTTPNPAEDKDLQLFRKLGLNPQQTRVLAGDNEQQQRLEQTLMTPDTDDYYNAAAL.

The 219-residue stretch at 38–256 (QQVQVSTLLS…IAVARIMMPT (219 aa)) folds into the Radical SAM core domain. Residues Cys-53, Cys-57, and Cys-60 each contribute to the [4Fe-4S] cluster site. Cys-97, Cys-128, Cys-188, and Arg-260 together coordinate [2Fe-2S] cluster.

The protein belongs to the radical SAM superfamily. Biotin synthase family. As to quaternary structure, homodimer. [4Fe-4S] cluster is required as a cofactor. The cofactor is [2Fe-2S] cluster.

It carries out the reaction (4R,5S)-dethiobiotin + (sulfur carrier)-SH + 2 reduced [2Fe-2S]-[ferredoxin] + 2 S-adenosyl-L-methionine = (sulfur carrier)-H + biotin + 2 5'-deoxyadenosine + 2 L-methionine + 2 oxidized [2Fe-2S]-[ferredoxin]. It functions in the pathway cofactor biosynthesis; biotin biosynthesis; biotin from 7,8-diaminononanoate: step 2/2. Functionally, catalyzes the conversion of dethiobiotin (DTB) to biotin by the insertion of a sulfur atom into dethiobiotin via a radical-based mechanism. In Salmonella newport (strain SL254), this protein is Biotin synthase.